A 365-amino-acid polypeptide reads, in one-letter code: Anhydro-N-acetylmuramic acid kinase (365 aa).

An ATP-binding site is contributed by Gly-12–Asp-19.

Belongs to the anhydro-N-acetylmuramic acid kinase family.

It catalyses the reaction 1,6-anhydro-N-acetyl-beta-muramate + ATP + H2O = N-acetyl-D-muramate 6-phosphate + ADP + H(+). Its pathway is amino-sugar metabolism; 1,6-anhydro-N-acetylmuramate degradation. It participates in cell wall biogenesis; peptidoglycan recycling. Functionally, catalyzes the specific phosphorylation of 1,6-anhydro-N-acetylmuramic acid (anhMurNAc) with the simultaneous cleavage of the 1,6-anhydro ring, generating MurNAc-6-P. Is required for the utilization of anhMurNAc either imported from the medium or derived from its own cell wall murein, and thus plays a role in cell wall recycling. In Rhizorhabdus wittichii (strain DSM 6014 / CCUG 31198 / JCM 15750 / NBRC 105917 / EY 4224 / RW1) (Sphingomonas wittichii), this protein is Anhydro-N-acetylmuramic acid kinase.